The sequence spans 783 residues: LPS-assembly protein LptD (783 aa).

A signal peptide spans 1 to 24; the sequence is MKKNYYSLISFSIFTALYSTAGFA.

The protein belongs to the LptD family. In terms of assembly, component of the lipopolysaccharide transport and assembly complex. Interacts with LptE and LptA.

The protein localises to the cell outer membrane. In terms of biological role, together with LptE, is involved in the assembly of lipopolysaccharide (LPS) at the surface of the outer membrane. The polypeptide is LPS-assembly protein LptD (Mannheimia succiniciproducens (strain KCTC 0769BP / MBEL55E)).